The primary structure comprises 960 residues: Importin alpha re-exporter (960 aa).

HEAT repeat units follow at residues Met-1–Gln-33, Asp-34–Asn-73, Gly-74–Arg-120, Trp-121–Leu-157, Phe-158–Asp-220, Ile-221–Glu-278, Asp-279–Pro-323, Lys-324–Asn-392, Glu-393–Ser-445, Thr-446–Leu-489, Thr-490–Glu-528, Ser-529–Asp-586, Ser-587–Thr-630, Gln-631–Thr-674, Ile-675–Phe-716, Pro-717–Asp-751, Met-752–Gly-794, and Ser-795–Gly-826. Residues Ser-23–Ser-96 form the Importin N-terminal domain. Positions Arg-366–Cys-381 match the Nuclear localization signal motif. The stretch at Asn-827 to Lys-928 is one HEAT 19; with insert repeat. One copy of the HEAT 20 repeat lies at Tyr-929–Asn-960.

Belongs to the XPO2/CSE1 family. Binds with high affinity to SRP1 only in the presence of RanGTP. The complex is dissociated by the RanGTP-binding protein YRB1.

The protein resides in the cytoplasm. It is found in the nucleus. Its function is as follows. Export receptor for importin alpha (SRP1). Mediates importin-alpha re-export from the nucleus to the cytoplasm after import substrates have been released into the nucleoplasm. The sequence is that of Importin alpha re-exporter (CSE1) from Saccharomyces cerevisiae (strain ATCC 204508 / S288c) (Baker's yeast).